Reading from the N-terminus, the 793-residue chain is Phenylalanine--tRNA ligase beta subunit (793 aa).

Positions 39 to 154 (TCSFSSIITA…ENTPLGESAC (116 aa)) constitute a tRNA-binding domain. Residues 403 to 481 (PQASTLSFRT…QPWKVENKKA (79 aa)) enclose the B5 domain. Residues D457, D463, E466, and E467 each contribute to the Mg(2+) site. Positions 697-793 (PIYPSSFRDI…QINDTKGTID (97 aa)) constitute an FDX-ACB domain.

The protein belongs to the phenylalanyl-tRNA synthetase beta subunit family. Type 1 subfamily. Tetramer of two alpha and two beta subunits. The cofactor is Mg(2+).

It localises to the cytoplasm. The catalysed reaction is tRNA(Phe) + L-phenylalanine + ATP = L-phenylalanyl-tRNA(Phe) + AMP + diphosphate + H(+). The protein is Phenylalanine--tRNA ligase beta subunit of Chlamydia caviae (strain ATCC VR-813 / DSM 19441 / 03DC25 / GPIC) (Chlamydophila caviae).